A 292-amino-acid polypeptide reads, in one-letter code: Transcription factor HFR1 (292 aa).

Residues Lys114–Lys153 are disordered. Residues Pro134–Asp147 form a basic motif; degenerate region. The 50-residue stretch at Pro134 to Leu183 folds into the bHLH domain. Over residues Lys139–Lys153 the composition is skewed to basic residues. The Nuclear localization signal motif lies at Ser141–Glu148. Residues Glu148–Leu183 are helix-loop-helix motif.

In terms of assembly, binds to FHY1 and FHL. Forms PHYA/FHY1/HFR1 complex. Homodimer and heterodimer with PIF3. Do not interact alone with either phytochrome A (phyA) or B (phyB), but REP1/PIF3 complex binds to phyA and phyB, preferentially to the Pfr forms. Forms non-functional heterodimer with PRE6, causing liberation of PIF4 from the transcriptionally inactive complex HFR1-PIF4. Repressed when bound to PRE1, PRE2 and PRE4. As to expression, mainly expressed in fruits and flowers and, to a lower extent, in leaves, stems, seedlings and roots.

The protein resides in the nucleus. Functionally, atypical bHLH transcription factor that regulates photomorphogenesis through modulation of phytochrome (e.g. PHYA) and cryptochrome signalings. Suppresses the transcriptional regulation activity of PIF4 by forming non-DNA-binding heterodimer. This is Transcription factor HFR1 from Arabidopsis thaliana (Mouse-ear cress).